Reading from the N-terminus, the 568-residue chain is Probable inactive 1-aminocyclopropane-1-carboxylate synthase-like protein 2 (568 aa).

The interval 1–21 is disordered; it reads MSHRSDTLPVPSGQRRGRVPR. Position 395 is an N6-(pyridoxal phosphate)lysine (Lys-395).

Belongs to the class-I pyridoxal-phosphate-dependent aminotransferase family.

The chain is Probable inactive 1-aminocyclopropane-1-carboxylate synthase-like protein 2 (ACCSL) from Homo sapiens (Human).